Consider the following 704-residue polypeptide: Polyribonucleotide nucleotidyltransferase (704 aa).

Asp485 and Asp491 together coordinate Mg(2+). Residues 552–611 form the KH domain; sequence PRIYTMKIDPKKIKDVIGKGGATIRALTEETGTSIDIDDDGTVKIAAVDGNAVKTVMARI. One can recognise an S1 motif domain in the interval 621–689; it reads GAVYTGKVTR…RQGRIRLTMR (69 aa).

This sequence belongs to the polyribonucleotide nucleotidyltransferase family. In terms of assembly, component of the RNA degradosome, which is a multiprotein complex involved in RNA processing and mRNA degradation. The cofactor is Mg(2+).

It localises to the cytoplasm. It catalyses the reaction RNA(n+1) + phosphate = RNA(n) + a ribonucleoside 5'-diphosphate. Its function is as follows. Involved in mRNA degradation. Catalyzes the phosphorolysis of single-stranded polyribonucleotides processively in the 3'- to 5'-direction. The polypeptide is Polyribonucleotide nucleotidyltransferase (Mannheimia succiniciproducens (strain KCTC 0769BP / MBEL55E)).